Reading from the N-terminus, the 611-residue chain is Chaperone protein DnaK (611 aa).

Residue T173 is modified to Phosphothreonine; by autocatalysis. The segment covering 577–592 (QAAAGQAEGAEGAQDA) has biased composition (low complexity). Positions 577 to 598 (QAAAGQAEGAEGAQDAGAKKDN) are disordered.

Belongs to the heat shock protein 70 family.

Acts as a chaperone. The chain is Chaperone protein DnaK from Bacillus anthracis (strain A0248).